The chain runs to 294 residues: Histone deacetylase HDT3 (294 aa).

Met-1 carries the N-acetylmethionine modification. The tract at residues 2-5 is required to repress transcription; the sequence is EFWG. Positions 124-269 are disordered; that stretch reads QVNFQLPNED…TPKSAGAFGC (146 aa). The segment covering 140–188 has biased composition (acidic residues); the sequence is DDADGSEEDSSDDDDSENSGDEEEEKVTAESDSEEDDSSDDEEDDSSEE. A compositionally biased stretch (basic and acidic residues) spans 189–202; the sequence is ETPKKPEEPKKRSA. Residues 203–213 are compositionally biased toward low complexity; that stretch reads EPNSSKNPASN. Positions 252–262 are enriched in polar residues; sequence GETSKQQQTPK. The C2H2-type zinc finger occupies 267 to 290; it reads FGCKSCTRTFTSEMGLQSHTKAKH.

The protein belongs to the histone deacetylase HD2 family. In terms of assembly, interacts with DNMT2. As to expression, expressed in leaves, roots, stems, young plantlets, flowers and siliques. Highest levels in ovules, embryos, shoot apical meristems and first leaves. Also expressed in somatic embryos.

The protein localises to the nucleus. It is found in the nucleolus. Functionally, probably mediates the deacetylation of lysine residues on the N-terminal part of the core histones (H2A, H2B, H3 and H4). Histone deacetylation gives a tag for epigenetic repression and plays an important role in transcriptional regulation, cell cycle progression and developmental events. Involved in the modulation of abscisic acid and stress-responsive genes. The polypeptide is Histone deacetylase HDT3 (HDT3) (Arabidopsis thaliana (Mouse-ear cress)).